Consider the following 190-residue polypeptide: A-type ATP synthase subunit E (190 aa).

Belongs to the V-ATPase E subunit family. Has multiple subunits with at least A(3), B(3), C, D, E, F, H, I and proteolipid K(x).

It localises to the cell membrane. Its function is as follows. Component of the A-type ATP synthase that produces ATP from ADP in the presence of a proton gradient across the membrane. The sequence is that of A-type ATP synthase subunit E from Pyrobaculum neutrophilum (strain DSM 2338 / JCM 9278 / NBRC 100436 / V24Sta) (Thermoproteus neutrophilus).